Consider the following 227-residue polypeptide: Cytochrome c oxidase subunit 2 (227 aa).

Topologically, residues 1–14 (MAYPLQLGFQDATS) are mitochondrial intermembrane. The chain crosses the membrane as a helical span at residues 15-45 (PIMEELLHFHDHTLMIVFLISSLVLYIISLM). The Mitochondrial matrix portion of the chain corresponds to 46 to 59 (LTTKLTHTSTMDAQ). A helical transmembrane segment spans residues 60-87 (EVETIWTILPAIILILIALPSLRILYMM). At 88 to 227 (DEINNPSLTI…HFEKWSTSML (140 aa)) the chain is on the mitochondrial intermembrane side. 6 residues coordinate Cu cation: histidine 161, cysteine 196, glutamate 198, cysteine 200, histidine 204, and methionine 207. Glutamate 198 serves as a coordination point for Mg(2+).

This sequence belongs to the cytochrome c oxidase subunit 2 family. Component of the cytochrome c oxidase (complex IV, CIV), a multisubunit enzyme composed of 14 subunits. The complex is composed of a catalytic core of 3 subunits MT-CO1, MT-CO2 and MT-CO3, encoded in the mitochondrial DNA, and 11 supernumerary subunits COX4I, COX5A, COX5B, COX6A, COX6B, COX6C, COX7A, COX7B, COX7C, COX8 and NDUFA4, which are encoded in the nuclear genome. The complex exists as a monomer or a dimer and forms supercomplexes (SCs) in the inner mitochondrial membrane with NADH-ubiquinone oxidoreductase (complex I, CI) and ubiquinol-cytochrome c oxidoreductase (cytochrome b-c1 complex, complex III, CIII), resulting in different assemblies (supercomplex SCI(1)III(2)IV(1) and megacomplex MCI(2)III(2)IV(2)). Found in a complex with TMEM177, COA6, COX18, COX20, SCO1 and SCO2. Interacts with TMEM177 in a COX20-dependent manner. Interacts with COX20. Interacts with COX16. Requires Cu cation as cofactor.

Its subcellular location is the mitochondrion inner membrane. The enzyme catalyses 4 Fe(II)-[cytochrome c] + O2 + 8 H(+)(in) = 4 Fe(III)-[cytochrome c] + 2 H2O + 4 H(+)(out). Its function is as follows. Component of the cytochrome c oxidase, the last enzyme in the mitochondrial electron transport chain which drives oxidative phosphorylation. The respiratory chain contains 3 multisubunit complexes succinate dehydrogenase (complex II, CII), ubiquinol-cytochrome c oxidoreductase (cytochrome b-c1 complex, complex III, CIII) and cytochrome c oxidase (complex IV, CIV), that cooperate to transfer electrons derived from NADH and succinate to molecular oxygen, creating an electrochemical gradient over the inner membrane that drives transmembrane transport and the ATP synthase. Cytochrome c oxidase is the component of the respiratory chain that catalyzes the reduction of oxygen to water. Electrons originating from reduced cytochrome c in the intermembrane space (IMS) are transferred via the dinuclear copper A center (CU(A)) of subunit 2 and heme A of subunit 1 to the active site in subunit 1, a binuclear center (BNC) formed by heme A3 and copper B (CU(B)). The BNC reduces molecular oxygen to 2 water molecules using 4 electrons from cytochrome c in the IMS and 4 protons from the mitochondrial matrix. The polypeptide is Cytochrome c oxidase subunit 2 (MT-CO2) (Rhinoceros unicornis (Greater Indian rhinoceros)).